A 223-amino-acid polypeptide reads, in one-letter code: MPGRQRRDGGSGPAGQNGPNSGDNSNARGDNRGGGRDRRDGGRGGNAAEKSQFIERVVTINRVSKVVKGGRRFSFTALVIVGDGNGLVGVGYGKAKEVPAAIQKGVEEARKSFFRVPMIANTITHPVQGEAAAGIVMLRPASPGTGVIAGGAVRAVLECAGIADILSKSLGSDNAINVVHATVAALKGLQRPEEVAARRGLTLEEVAPAGMLRARAQAAGSVK.

The tract at residues 1–48 (MPGRQRRDGGSGPAGQNGPNSGDNSNARGDNRGGGRDRRDGGRGGNAA) is disordered. Basic and acidic residues predominate over residues 29 to 42 (GDNRGGGRDRRDGG). The S5 DRBM domain occupies 53–116 (FIERVVTINR…EEARKSFFRV (64 aa)).

It belongs to the universal ribosomal protein uS5 family. As to quaternary structure, part of the 30S ribosomal subunit. Contacts proteins S4 and S8.

In terms of biological role, with S4 and S12 plays an important role in translational accuracy. Located at the back of the 30S subunit body where it stabilizes the conformation of the head with respect to the body. The chain is Small ribosomal subunit protein uS5 from Rhodococcus erythropolis (strain PR4 / NBRC 100887).